A 660-amino-acid polypeptide reads, in one-letter code: DNA ligase (660 aa).

NAD(+)-binding positions include 32–36, 81–82, and Glu112; these read DEVYD and SM. Residue Lys114 is the N6-AMP-lysine intermediate of the active site. 4 residues coordinate NAD(+): Arg135, Glu169, Lys284, and Lys308. The Zn(2+) site is built by Cys402, Cys405, Cys418, and Cys423. The region spanning 578–660 is the BRCT domain; the sequence is VENSPLAHKT…ELLKEAGIEA (83 aa).

This sequence belongs to the NAD-dependent DNA ligase family. LigA subfamily. Mg(2+) serves as cofactor. The cofactor is Mn(2+).

It catalyses the reaction NAD(+) + (deoxyribonucleotide)n-3'-hydroxyl + 5'-phospho-(deoxyribonucleotide)m = (deoxyribonucleotide)n+m + AMP + beta-nicotinamide D-nucleotide.. Functionally, DNA ligase that catalyzes the formation of phosphodiester linkages between 5'-phosphoryl and 3'-hydroxyl groups in double-stranded DNA using NAD as a coenzyme and as the energy source for the reaction. It is essential for DNA replication and repair of damaged DNA. The chain is DNA ligase from Nitratiruptor sp. (strain SB155-2).